We begin with the raw amino-acid sequence, 71 residues long: Non-disulfide-bridged peptide 5.5 (71 aa).

The signal sequence occupies residues 1–23; that stretch reads MKTQFIVLIVAIVFLQLLSQSEA. At Leu36 the chain carries Leucine amide. Positions 40-71 are excised as a propeptide; that stretch reads DLRHLDLDQFDDMFDQPEISAADMKFLQDLLR.

Belongs to the non-disulfide-bridged peptide (NDBP) superfamily. Short antimicrobial peptide (group 4) family. As to expression, expressed by the venom gland.

It localises to the secreted. The protein localises to the target cell membrane. In terms of biological role, antimicrobial peptide. Is active on Mycobacterium abscessus subsp. massiliense (MBC=200 uM), a rapidly growing and emerging pathogen associated with healthcare infections. Also shows antifungal activities. Has a weak hemolytic activity on human erythrocytes (10% at 610 uM), indicating a low toxicity (therapeutic index (TI)=3.05). In addition, treatment of infected macrophages reduces the bacterial load. In vivo, treatment of M.abscessus-infected mice causes a decrease in the bacterial load in the lungs and liver. The chain is Non-disulfide-bridged peptide 5.5 from Hoffmannihadrurus gertschi (Scorpion).